A 345-amino-acid chain; its full sequence is Phosphoribosylformylglycinamidine cyclo-ligase (345 aa).

This sequence belongs to the AIR synthase family.

The protein resides in the cytoplasm. It carries out the reaction 2-formamido-N(1)-(5-O-phospho-beta-D-ribosyl)acetamidine + ATP = 5-amino-1-(5-phospho-beta-D-ribosyl)imidazole + ADP + phosphate + H(+). It participates in purine metabolism; IMP biosynthesis via de novo pathway; 5-amino-1-(5-phospho-D-ribosyl)imidazole from N(2)-formyl-N(1)-(5-phospho-D-ribosyl)glycinamide: step 2/2. The polypeptide is Phosphoribosylformylglycinamidine cyclo-ligase (Prochlorococcus marinus (strain MIT 9211)).